The primary structure comprises 325 residues: Centromere protein O (325 aa).

Positions 1–35 (MEEERNSDEKENALCGRSLTAASRDGGGRMPAAPL) are disordered. Residues 55-112 (LEMLEAQAHELGLKQEEKEQQEKKLDRLKARVQELRARRDELRAKVELQEKRLLDKEG) are a coiled coil.

Belongs to the CENP-O/MCM21 family. As to quaternary structure, component of the CENPA-HI complex, at least composed of CENPH, CENPI, CENPK, CENPL, CENPM, CENPO and CENPP. Component of a discrete complex composed of at least CENPO, CENPP, CENPQ, CENPR and CENPU.

Its subcellular location is the nucleus. It is found in the chromosome. It localises to the centromere. Its function is as follows. Component of the CENPA-HI complex, a centromeric complex involved in assembly of kinetochore proteins, mitotic progression and chromosome segregation. Involved in kinetochore assembly and required for recovery from spindle damage. The sequence is that of Centromere protein O (CENPO) from Gallus gallus (Chicken).